Consider the following 386-residue polypeptide: Protein phosphatase methylesterase 1 (386 aa).

Positions 1-38 are disordered; it reads MSALEKSMHLGRLPSRPPLPGSGGSQSGAKMRMGPGRK. S15 is modified (phosphoserine). R16 bears the Asymmetric dimethylarginine; alternate mark. Position 16 is an omega-N-methylarginine; alternate (R16). The residue at position 42 (S42) is a Phosphoserine. S156 is a catalytic residue. Acidic residues predominate over residues 254-265; sequence IIEEEEEDEEGS. The tract at residues 254-280 is disordered; that stretch reads IIEEEEEDEEGSESISKRKKEDDMETK. Residues 268-280 are compositionally biased toward basic and acidic residues; the sequence is ISKRKKEDDMETK. H349 is an active-site residue.

Belongs to the AB hydrolase superfamily. In terms of assembly, binds PPP2CA and PPP2CB. Phosphorylated by SIK1 following increases in intracellular sodium, leading to dissociation from the protein phosphatase 2A (PP2A) complex and subsequent dephosphorylation of sodium/potassium-transporting ATPase ATP1A1.

It catalyses the reaction [phosphatase 2A protein]-C-terminal L-leucine methyl ester + H2O = [phosphatase 2A protein]-C-terminal L-leucine + methanol + H(+). In terms of biological role, demethylates proteins that have been reversibly carboxymethylated. Demethylates PPP2CB (in vitro) and PPP2CA. Binding to PPP2CA displaces the manganese ion and inactivates the enzyme. The polypeptide is Protein phosphatase methylesterase 1 (PPME1) (Pongo abelii (Sumatran orangutan)).